We begin with the raw amino-acid sequence, 214 residues long: MNMVFLGPPGAGKGTYAKRLIEMLNIPHISTGDMFREAVASKSELGKKVEEILKRGDLVPDDLTNSIVKDRLSKEDCKNGFILDGFPRTVAQAKALDEIMRSLGKDLDYVIYFEVDEEEVVKRISNRRICSNCGKIYNLITLPPKVDGKCDVCGGTLYQREDDKEEVVRKRYRVYMENTYPVIEYYQKSNKLFTVNGALDVDSVIKEVLNIIRR.

10–15 (GAGKGT) lines the ATP pocket. Positions 30–59 (STGDMFREAVASKSELGKKVEEILKRGDLV) are NMP. Residues T31, R36, 57–59 (DLV), 85–88 (GFPR), and Q92 contribute to the AMP site. The tract at residues 126–163 (NRRICSNCGKIYNLITLPPKVDGKCDVCGGTLYQREDD) is LID. R127 serves as a coordination point for ATP. Zn(2+) contacts are provided by C130 and C133. 136 to 137 (IY) contacts ATP. Zn(2+) contacts are provided by C150 and C153. Residues R160 and R171 each coordinate AMP. Residue L199 coordinates ATP.

This sequence belongs to the adenylate kinase family. Monomer.

It localises to the cytoplasm. It catalyses the reaction AMP + ATP = 2 ADP. Its pathway is purine metabolism; AMP biosynthesis via salvage pathway; AMP from ADP: step 1/1. Catalyzes the reversible transfer of the terminal phosphate group between ATP and AMP. Plays an important role in cellular energy homeostasis and in adenine nucleotide metabolism. The polypeptide is Adenylate kinase (Thermosipho africanus (strain TCF52B)).